The primary structure comprises 161 residues: Endoribonuclease YbeY (161 aa).

His-120, His-124, and His-130 together coordinate Zn(2+).

This sequence belongs to the endoribonuclease YbeY family. Zn(2+) serves as cofactor.

The protein resides in the cytoplasm. Functionally, single strand-specific metallo-endoribonuclease involved in late-stage 70S ribosome quality control and in maturation of the 3' terminus of the 16S rRNA. This chain is Endoribonuclease YbeY, found in Erythrobacter litoralis (strain HTCC2594).